The chain runs to 324 residues: MQSTQPIQRCVLGSQQALPELAVSLLDNLGLITMTGNDKKSYLQGQVTCDVVSLETDQVTWGGHCDAKGKLWSVFRLFHYADGYAMLQDKSAIDVELRELKKYAVFAKVEINVSDAILLGVCGVQAEQAIAKLTNNAEAAVVTFAQGTAVKISPQRWLLVVDANQQDEVLAMLATAPLCDHALWDLYDILEVAPRIPAFAQNEHIPQAVNLQAVNGISFKKGCYTGQETVARAKYRGINKRALYRLSGTIAPSAPETTISLERSVGDNWRAAGEALVSYHFDDGRATGLFVLPNDLEPETQFRLAGQSEQLWQREPLPYSLDDE.

W184 is a folate binding site.

This sequence belongs to the tRNA-modifying YgfZ family.

It is found in the cytoplasm. In terms of biological role, folate-binding protein involved in regulating the level of ATP-DnaA and in the modification of some tRNAs. It is probably a key factor in regulatory networks that act via tRNA modification, such as initiation of chromosomal replication. This is tRNA-modifying protein YgfZ from Vibrio vulnificus (strain CMCP6).